A 283-amino-acid chain; its full sequence is Nucleotide-binding protein Sama_3091 (283 aa).

ATP is bound at residue 8 to 15 (GRSGSGKS). A GTP-binding site is contributed by 56 to 59 (DIRN).

The protein belongs to the RapZ-like family.

Functionally, displays ATPase and GTPase activities. This chain is Nucleotide-binding protein Sama_3091, found in Shewanella amazonensis (strain ATCC BAA-1098 / SB2B).